A 529-amino-acid polypeptide reads, in one-letter code: All-trans-zeta-carotene desaturase (529 aa).

FAD is bound at residue 12 to 45 (IVVGAGPGGLSAAINLAGQGFRVTVVEKDAVPGG).

It belongs to the carotenoid/retinoid oxidoreductase family. Requires FAD as cofactor.

It catalyses the reaction all-trans-zeta-carotene + 2 A = all-trans-lycopene + 2 AH2. It functions in the pathway carotenoid biosynthesis; lycopene biosynthesis. Dehydrogenates carotenes in the trans conformation: converts all-trans-zeta-carotene into all-trans-lycopene, one of the last dehydrogenation steps of lycopene biosynthesis. This is All-trans-zeta-carotene desaturase (carC) from Myxococcus xanthus.